The sequence spans 318 residues: Probable endolytic peptidoglycan transglycosylase RlpA (318 aa).

The first 21 residues, 1-21, serve as a signal peptide directing secretion; that stretch reads MMDKRVVAVAAVLWNVQMLFA. Residues 121–191 form a disordered region; that stretch reads DPNAHASQQR…GVANTTDVPA (71 aa). Residues 125–137 show a composition bias toward polar residues; the sequence is HASQQRNDRQTSP.

The protein belongs to the RlpA family.

Lytic transglycosylase with a strong preference for naked glycan strands that lack stem peptides. This Treponema pallidum (strain Nichols) protein is Probable endolytic peptidoglycan transglycosylase RlpA.